Reading from the N-terminus, the 1117-residue chain is MENRPRQQTSGHDCSLGTGDDLSSRPGRVDLLRAHISPTTVKQVSVNHERKVVGSSSSRSAVWGISPDGSNAFESKNFGLEGDSNHTVEHEVIKEEDSQKKSPFSCGSAPRVVDSPGASVVSREGRVGPPSDGSAVVSGDDETDANNSEDGTEDEIVSEEGRRTEDEGDVTSRSDQVPCTPPPMWVPEVLSDESEETPLRRVGEERHVSDSSSGGDGYLRGTRQGRVRPHAVPPLFHTPSHFTPVRATSSRLISLSSDSERMHRMAQKVQTQPEMKPKELDKEAERKQEQLRSSKGDNKGIFKGLLRQLTRGYTGVAHLFDGLASDFKPHTENEGSSSNDVLTEERTVQPSSAVVSDKRVTGNGTGVERFKPRVRHRLSQECRPSFPEKPDEETSLSTTLPTKLKSLFSFASSHWNHASPGEGEATEAAGASVSGSSSFLAANANHSPSMLDAYGRPPQKRTQRRSFFGSVAAAASNAFAEAGAVAAAAAEAVAAVGQSSSDSSGDSSSESDHSGRERSRAFRGKRGGSNEITTMRSQRSAGHLSFSREPERESDQGEMTPTGETSGSESELDQVILTEHATPFNFVLWATREAAASLQRPLLSGPPEEEAGNAEELRSTENAIHRRELQRLGRLRAVALRLLLLICEDDSWCQDGTTRQSAHKGANDGARRRFPPIVQGVRGRRRSDRDTESPPTEATQDSEEVDRLWSQWINGSPETEGGEDADRKQEEKRLQGRGVSRSRYMWKAANRMLSVDRRLRKLHSDTAVRRMGETEFWKLYFYQVFLLMNRFDRQAHKVLRSLSCSFTLTTGEGGDENQPQEVAHDVLSQTSGFTESDTSSPSPSYGFASSPCTSARLIIPPTGLPDNTEEGEPLSFGGVSLEPKDEEAPEQVRQDGLGALAYAIFSSSRSPSLSSSSSGTTSVSARGTGSSFSRDVGESPLLVPRDSHRSGVGSETYSAGGDSPALREKVISENAGCLPLGRAPSQPTNTVSSVSSNRAYLEPASRRGSFSVVPVSGRRLRDALFAKRVSSSSQVNGRVSTSRGTMGEDRHQDQQGDNRLEGPSHLSAHNSLYQLGSRSGNCVQIKVKELKELDGTCGDTHQPGLACKGKEVQGARA.

The segment covering 1–12 (MENRPRQQTSGH) has biased composition (polar residues). Disordered stretches follow at residues 1 to 27 (MENR…SRPG), 47 to 243 (NHER…SHFT), 258 to 301 (DSER…NKGI), 325 to 398 (SDFK…SLST), 415 to 442 (WNHA…FLAA), 490 to 572 (AEAV…ESEL), 600 to 619 (RPLL…ELRS), and 654 to 736 (QDGT…RLQG). Composition is skewed to basic and acidic residues over residues 83–100 (DSNH…DSQK), 197–209 (TPLR…RHVS), and 275–300 (MKPK…DNKG). Low complexity-rich tracts occupy residues 418–442 (ASPG…FLAA) and 490–508 (AEAV…GDSS). Residues 510–520 (ESDHSGRERSR) are compositionally biased toward basic and acidic residues. The span at 530 to 540 (NEITTMRSQRS) shows a compositional bias: polar residues. Over residues 546 to 555 (FSREPERESD) the composition is skewed to basic and acidic residues. Positions 557 to 569 (GEMTPTGETSGSE) are enriched in polar residues. Residues 724-734 (DADRKQEEKRL) are compositionally biased toward basic and acidic residues. The 37-residue stretch at 752 to 788 (MLSVDRRLRKLHSDTAVRRMGETEFWKLYFYQVFLLM) folds into the BSD domain. The span at 829–838 (QTSGFTESDT) shows a compositional bias: polar residues. Disordered regions lie at residues 829–848 (QTSG…YGFA), 858–891 (IIPP…APEQ), 909–964 (RSPS…GDSP), 1031–1066 (SSSQ…PSHL), and 1095–1117 (GTCG…GARA). A compositionally biased stretch (low complexity) spans 839–848 (SSPSPSYGFA). The span at 909–931 (RSPSLSSSSSGTTSVSARGTGSS) shows a compositional bias: low complexity. The span at 1031–1044 (SSSQVNGRVSTSRG) shows a compositional bias: polar residues. 2 stretches are compositionally biased toward basic and acidic residues: residues 1046–1062 (MGED…RLEG) and 1108–1117 (KGKEVQGARA).

In terms of assembly, interacts with RASP2.

The protein resides in the cytoplasmic vesicle. Its subcellular location is the secretory vesicle. It is found in the rhoptry membrane. The protein is Rhoptry apical surface protein 3 of Toxoplasma gondii (strain ATCC 50853 / GT1).